The chain runs to 299 residues: Coenzyme PQQ synthesis protein B (299 aa).

This sequence belongs to the PqqB family.

Its pathway is cofactor biosynthesis; pyrroloquinoline quinone biosynthesis. May be involved in the transport of PQQ or its precursor to the periplasm. This Methylorubrum extorquens (strain CM4 / NCIMB 13688) (Methylobacterium extorquens) protein is Coenzyme PQQ synthesis protein B.